Reading from the N-terminus, the 372-residue chain is RNA polymerase sigma factor SigA (372 aa).

The segment at 139–209 (LAEANLRLVV…TRAIADQART (71 aa)) is sigma-70 factor domain-2. The short motif at 163–166 (DLIQ) is the Interaction with polymerase core subunit RpoC element. The segment at 218 to 294 (ETINKLIRVQ…DQDALAPSDA (77 aa)) is sigma-70 factor domain-3. Residues 307–360 (VLDTLTDREENVLRLRFGLDDGRTRTLEEVGKVFGVTRERIRQIEAKALRKLRH) form a sigma-70 factor domain-4 region. A DNA-binding region (H-T-H motif) is located at residues 333-352 (LEEVGKVFGVTRERIRQIEA).

The protein belongs to the sigma-70 factor family. RpoD/SigA subfamily. Interacts transiently with the RNA polymerase catalytic core.

It localises to the cytoplasm. Sigma factors are initiation factors that promote the attachment of RNA polymerase to specific initiation sites and are then released. This sigma factor is the primary sigma factor during exponential growth. The chain is RNA polymerase sigma factor SigA from Halalkalibacterium halodurans (strain ATCC BAA-125 / DSM 18197 / FERM 7344 / JCM 9153 / C-125) (Bacillus halodurans).